Consider the following 421-residue polypeptide: Leucine-rich repeat-containing protein 42 (421 aa).

LRR repeat units follow at residues 149-170 (VLCS…EEIK), 174-195 (ELTR…LEHL), 202-222 (SVTQ…RKMT), 234-255 (NLTL…GYLF), and 259-280 (KLNC…KDKL). Residues 374-406 (HEPLLSQESKKSKKRAFEESEQEQSSPQSAKQK) form a disordered region. The residue at position 399 (Ser-399) is a Phosphoserine.

It belongs to the LRRC42 family.

The polypeptide is Leucine-rich repeat-containing protein 42 (Lrrc42) (Rattus norvegicus (Rat)).